A 276-amino-acid polypeptide reads, in one-letter code: Adenylate kinase (276 aa).

38–43 (GSGKGT) is a binding site for ATP. The tract at residues 58 to 87 (STGDMLRAAIEQGTETGKQAKTIMDQGGLV) is NMP. AMP is bound by residues Thr59, Arg64, 85–87 (GLV), 113–116 (GFPR), and Gln120. An LID region spans residues 154 to 191 (GRLVHPSSGRSYHREFFPPKVDMIDDITGEPLIQRSDD). ATP contacts are provided by residues Arg155 and 164–165 (SY). Arg188 and Arg199 together coordinate AMP. Lys227 lines the ATP pocket.

It belongs to the adenylate kinase family. AK2 subfamily. Monomer.

It localises to the cytoplasm. The protein resides in the cytosol. Its subcellular location is the mitochondrion intermembrane space. It carries out the reaction AMP + ATP = 2 ADP. Catalyzes the reversible transfer of the terminal phosphate group between ATP and AMP. Plays an important role in cellular energy homeostasis and in adenine nucleotide metabolism. Adenylate kinase activity is critical for regulation of the phosphate utilization and the AMP de novo biosynthesis pathways. This chain is Adenylate kinase (adkA), found in Dictyostelium discoideum (Social amoeba).